The sequence spans 1778 residues: Nuclear receptor corepressor 1 (1778 aa).

The SANT domain occupies 125–176 (DRLEEWSPEERSLFKSRQADHVKIFHGLTEFFVDKTASDLVLFYYMNKKTED). The Myb-like domain maps to 356–398 (WTDDEKTKLVTLINSSPTLDWVSISEGMNRRPNECKMQYDAMN). Over residues 409–421 (VDEEDGNGQEEGG) the composition is skewed to acidic residues. 6 disordered regions span residues 409–671 (VDEE…TVST), 992–1024 (SLTP…AGRS), 1195–1218 (KLQQ…ATPQ), 1276–1339 (QHLQ…SRSV), 1414–1434 (PPKT…RTLS), and 1646–1718 (AAPT…PPLP). Composition is skewed to low complexity over residues 431–442 (SSAAARRSGLAR) and 450–469 (TPRA…VTRA). Residues 478–493 (DLGEEIDEMEIEDNDE) are compositionally biased toward acidic residues. The segment covering 494–513 (DASRGSRGKDSKAPSDRDGS) has biased composition (basic and acidic residues). Acidic residues-rich tracts occupy residues 517 to 545 (MEGD…EEEE) and 599 to 616 (ESDD…DVDE). 2 stretches are compositionally biased toward low complexity: residues 626 to 639 (SSSS…SVGG) and 649 to 671 (LVQQ…TVST). Positions 1276 to 1285 (QHLQQQQQHH) are enriched in low complexity. The span at 1687–1696 (SSVNSNVSDV) shows a compositional bias: low complexity.

The protein belongs to the N-CoR nuclear receptor corepressors family. In terms of assembly, interacts with gex-3. Interacts (via C-terminus) with nhr-60. In terms of tissue distribution, in larvae, expressed in pharyngeal neurons, ventral and dorsal nerve cords, tail neurons, egg-laying neurons and egg-laying muscles. Detected in the neurons of the pharyngeal nerve ring, head neurons, tail neurons and egg-laying muscles in adults. Detected in male-specific tail ganglia and rays in males.

The protein localises to the nucleus. Its function is as follows. Mediates transcriptional repression by certain nuclear receptors. Plays a role in development and neuronal function. May play a role in muscle-specific oxidative mitochondrial metabolism. The chain is Nuclear receptor corepressor 1 from Caenorhabditis elegans.